A 359-amino-acid polypeptide reads, in one-letter code: MKTAAARGATRRDGQPKLGLCVLCGLPAAGKSTFARALALRLRRERGWAVGVLSYDDVLPLALPDCDGTQPRPSQWKMFRQELLKHLECFLVAVISGAQMSAPPNRTEAVWEDFITCLKSQDLMIFPTALEAQPCHLLAKPAVSRPLFLVLDDNFYYQSMRYEVYQLARKYSLGFCQLFLDCPLETCLKRNGERSQPLPDETIQLMGRKIEKPNPEKNAWEHNSLIIQSSACSLEASLEVTGLLLTALENPIKCVEDNTEQKETDRIICSTNILHKADETLRRTVSQTMREAKDEQIPLNNLKHLAEELNKLKADVLEDLRQGNRKYLCFQQTTDLSDIISSFCKERDTIVQKYFSKQH.

An ATP-binding site is contributed by 25 to 32; that stretch reads GLPAAGKS.

The protein belongs to the L-seryl-tRNA(Sec) kinase family. Requires Mg(2+) as cofactor.

It catalyses the reaction L-seryl-tRNA(Sec) + ATP = O-phospho-L-seryl-tRNA(Sec) + ADP. It functions in the pathway aminoacyl-tRNA biosynthesis; selenocysteinyl-tRNA(Sec) biosynthesis; selenocysteinyl-tRNA(Sec) from L-seryl-tRNA(Sec) (archaeal/eukaryal route): step 1/2. Its function is as follows. Specifically phosphorylates seryl-tRNA(Sec) to O-phosphoseryl-tRNA(Sec), an activated intermediate for selenocysteine biosynthesis. No activity with other tRNAs has been detected. This chain is L-seryl-tRNA(Sec) kinase (Pstk), found in Mus musculus (Mouse).